Here is a 142-residue protein sequence, read N- to C-terminus: Holo-[acyl-carrier-protein] synthase (142 aa).

Positions 8 and 57 each coordinate Mg(2+).

It belongs to the P-Pant transferase superfamily. AcpS family. Mg(2+) serves as cofactor.

It is found in the cytoplasm. It carries out the reaction apo-[ACP] + CoA = holo-[ACP] + adenosine 3',5'-bisphosphate + H(+). Transfers the 4'-phosphopantetheine moiety from coenzyme A to a Ser of acyl-carrier-protein. In Ruegeria sp. (strain TM1040) (Silicibacter sp.), this protein is Holo-[acyl-carrier-protein] synthase.